Consider the following 115-residue polypeptide: Small ribosomal subunit protein uS13 (115 aa).

The segment at 92–115 (RRGLPVRGQNTKNNARTRKGSKRK) is disordered. Residues 106-115 (ARTRKGSKRK) are compositionally biased toward basic residues.

It belongs to the universal ribosomal protein uS13 family. In terms of assembly, part of the 30S ribosomal subunit. Forms a loose heterodimer with protein S19. Forms two bridges to the 50S subunit in the 70S ribosome.

Located at the top of the head of the 30S subunit, it contacts several helices of the 16S rRNA. In the 70S ribosome it contacts the 23S rRNA (bridge B1a) and protein L5 of the 50S subunit (bridge B1b), connecting the 2 subunits; these bridges are implicated in subunit movement. Contacts the tRNAs in the A and P-sites. The sequence is that of Small ribosomal subunit protein uS13 from Lactobacillus gasseri (strain ATCC 33323 / DSM 20243 / BCRC 14619 / CIP 102991 / JCM 1131 / KCTC 3163 / NCIMB 11718 / NCTC 13722 / AM63).